Here is a 491-residue protein sequence, read N- to C-terminus: Probable G-protein coupled receptor Mth-like 7 (491 aa).

The first 22 residues, 1–22, serve as a signal peptide directing secretion; that stretch reads MRLPWVIFCTVLLLIFTNNSNA. N-linked (GlcNAc...) asparagine glycosylation is found at N18 and N42. Over 23–167 the chain is Extracellular; it reads DIPGCNYYDT…EEVSIQIFNK (145 aa). Intrachain disulfides connect C27/C80, C82/C87, and C92/C103. The chain crosses the membrane as a helical span at residues 168-188; the sequence is CGLIVWFQDGKFWVTVDLFME. Over 189 to 222 the chain is Cytoplasmic; that stretch reads KQDYCLYRHNFDSDFPKSMWIIRHRCTSHISPGS. A helical membrane pass occupies residues 223–243; that stretch reads LEILIITMICFVLTIAVYLYI. Over 244–252 the chain is Extracellular; it reads KKLRNVTGK. N248 is a glycosylation site (N-linked (GlcNAc...) asparagine). A helical membrane pass occupies residues 253 to 273; it reads CIVCCIVSRFIQCLIMILDHL. The Cytoplasmic segment spans residues 274–325; the sequence is NLLNGICSPAGYSSHFFRMASNLWLSVISYHTWKVLTSLNRVDPNYRFLRYN. A helical membrane pass occupies residues 326-346; the sequence is AFVWSTAAIMTGSIYIVNQIW. Over 347 to 372 the chain is Extracellular; it reads ENDPSKWNWLPLVGFIRCSVKDWHPS. Residues 373–393 form a helical membrane-spanning segment; sequence VWIYISGPSLALSTFNVAMFA. Over 394–434 the chain is Cytoplasmic; sequence LTAIYIRKVKGGINKFTNEEEGRINCINFDSQTYLQFLRLS. A helical transmembrane segment spans residues 435–455; that stretch reads IVMGLTWIFNVIPYSARLHIF. At 456-458 the chain is on the extracellular side; the sequence is WEW. Residues 459–479 traverse the membrane as a helical segment; sequence VGIISEYFHSAFGIVLFVLLV. Residues 480 to 491 are Cytoplasmic-facing; sequence LKRSTWTLMMDS.

It belongs to the G-protein coupled receptor 2 family. Mth subfamily.

It is found in the cell membrane. The protein is Probable G-protein coupled receptor Mth-like 7 (mthl7) of Drosophila melanogaster (Fruit fly).